Reading from the N-terminus, the 373-residue chain is Chorismate synthase (373 aa).

NADP(+) is bound at residue Arg-46. FMN contacts are provided by residues 123–125, 251–252, Gly-295, 310–314, and Arg-337; these read RSS, NA, and KPTPS.

It belongs to the chorismate synthase family. Requires FMNH2 as cofactor.

The enzyme catalyses 5-O-(1-carboxyvinyl)-3-phosphoshikimate = chorismate + phosphate. It participates in metabolic intermediate biosynthesis; chorismate biosynthesis; chorismate from D-erythrose 4-phosphate and phosphoenolpyruvate: step 7/7. Catalyzes the anti-1,4-elimination of the C-3 phosphate and the C-6 proR hydrogen from 5-enolpyruvylshikimate-3-phosphate (EPSP) to yield chorismate, which is the branch point compound that serves as the starting substrate for the three terminal pathways of aromatic amino acid biosynthesis. This reaction introduces a second double bond into the aromatic ring system. This chain is Chorismate synthase, found in Methanococcus maripaludis (strain C7 / ATCC BAA-1331).